The primary structure comprises 425 residues: Glutamyl-tRNA reductase (425 aa).

Substrate is bound by residues 49 to 52 (TCNR), Ser-106, 111 to 113 (EPQ), and Gln-117. The Nucleophile role is filled by Cys-50. Position 186–191 (186–191 (GAGETI)) interacts with NADP(+).

This sequence belongs to the glutamyl-tRNA reductase family. Homodimer.

The enzyme catalyses (S)-4-amino-5-oxopentanoate + tRNA(Glu) + NADP(+) = L-glutamyl-tRNA(Glu) + NADPH + H(+). Its pathway is porphyrin-containing compound metabolism; protoporphyrin-IX biosynthesis; 5-aminolevulinate from L-glutamyl-tRNA(Glu): step 1/2. In terms of biological role, catalyzes the NADPH-dependent reduction of glutamyl-tRNA(Glu) to glutamate 1-semialdehyde (GSA). In Saccharophagus degradans (strain 2-40 / ATCC 43961 / DSM 17024), this protein is Glutamyl-tRNA reductase.